Consider the following 101-residue polypeptide: Guanyl-specific ribonuclease St (101 aa).

A disulfide bridge connects residues Cys-4 and Cys-54. Catalysis depends on Glu-61, which acts as the Proton acceptor. His-91 acts as the Proton donor in catalysis.

This sequence belongs to the ribonuclease N1/T1 family.

It catalyses the reaction [RNA] containing guanosine + H2O = an [RNA fragment]-3'-guanosine-3'-phosphate + a 5'-hydroxy-ribonucleotide-3'-[RNA fragment].. This is Guanyl-specific ribonuclease St from Saccharopolyspora erythraea (Streptomyces erythraeus).